Here is a 450-residue protein sequence, read N- to C-terminus: Bifunctional protein GlmU (450 aa).

The segment at 1-226 (MLAVAVLAAG…PDEVNGINNR (226 aa)) is pyrophosphorylase. UDP-N-acetyl-alpha-D-glucosamine contacts are provided by residues 7-10 (LAAG), lysine 21, glutamine 73, and 78-79 (GT). Aspartate 103 contributes to the Mg(2+) binding site. UDP-N-acetyl-alpha-D-glucosamine is bound by residues glycine 140, glutamate 155, asparagine 170, and asparagine 224. Asparagine 224 is a binding site for Mg(2+). The linker stretch occupies residues 227–247 (KQLAQCEGVLQQRLRDYWMDE). The interval 248-450 (GVTFVDPASC…TKDNWANRSI (203 aa)) is N-acetyltransferase. UDP-N-acetyl-alpha-D-glucosamine contacts are provided by arginine 329 and lysine 347. Histidine 359 functions as the Proton acceptor in the catalytic mechanism. Residues tyrosine 362 and asparagine 373 each coordinate UDP-N-acetyl-alpha-D-glucosamine. Residues alanine 376, 382–383 (NY), alanine 419, and arginine 436 each bind acetyl-CoA.

It in the N-terminal section; belongs to the N-acetylglucosamine-1-phosphate uridyltransferase family. This sequence in the C-terminal section; belongs to the transferase hexapeptide repeat family. As to quaternary structure, homotrimer. The cofactor is Mg(2+).

The protein resides in the cytoplasm. It catalyses the reaction alpha-D-glucosamine 1-phosphate + acetyl-CoA = N-acetyl-alpha-D-glucosamine 1-phosphate + CoA + H(+). The catalysed reaction is N-acetyl-alpha-D-glucosamine 1-phosphate + UTP + H(+) = UDP-N-acetyl-alpha-D-glucosamine + diphosphate. The protein operates within nucleotide-sugar biosynthesis; UDP-N-acetyl-alpha-D-glucosamine biosynthesis; N-acetyl-alpha-D-glucosamine 1-phosphate from alpha-D-glucosamine 6-phosphate (route II): step 2/2. It participates in nucleotide-sugar biosynthesis; UDP-N-acetyl-alpha-D-glucosamine biosynthesis; UDP-N-acetyl-alpha-D-glucosamine from N-acetyl-alpha-D-glucosamine 1-phosphate: step 1/1. It functions in the pathway bacterial outer membrane biogenesis; LPS lipid A biosynthesis. Functionally, catalyzes the last two sequential reactions in the de novo biosynthetic pathway for UDP-N-acetylglucosamine (UDP-GlcNAc). The C-terminal domain catalyzes the transfer of acetyl group from acetyl coenzyme A to glucosamine-1-phosphate (GlcN-1-P) to produce N-acetylglucosamine-1-phosphate (GlcNAc-1-P), which is converted into UDP-GlcNAc by the transfer of uridine 5-monophosphate (from uridine 5-triphosphate), a reaction catalyzed by the N-terminal domain. The protein is Bifunctional protein GlmU of Synechococcus sp. (strain CC9902).